The following is a 378-amino-acid chain: Transcription initiation factor IIA subunit 1 (378 aa).

A2 bears the N-acetylalanine mark. 3 stretches are compositionally biased toward low complexity: residues 69 to 79 (QVQQQHQPQQQ), 89 to 106 (QQAQ…TQQV), and 247 to 281 (PAQA…TGDT). 2 disordered regions span residues 69–108 (QVQQ…QVLI) and 247–331 (PAQA…QELF). Phosphoserine; by TAF1 occurs at positions 282, 283, 318, and 323. Residues 282-331 (SSEEDEDEEEDYDDDEEEDKEKDGAEDGQVEEEPLNSEDDVSDEEGQELF) show a composition bias toward acidic residues. DNA contacts are provided by H345 and R346.

It belongs to the TFIIA subunit 1 family. As to quaternary structure, TFIIA is a heterodimer of the large unprocessed subunit 1 and a small subunit gamma. It was originally believed to be a heterotrimer of an alpha (p35), a beta (p19) and a gamma subunit (p12). TFIIA forms a complex with TBP. Part of TBP-based Pol II pre-initiation complex (PIC), in which Pol II core assembles with general transcription factors and other specific initiation factors including GTF2E1, GTF2E2, GTF2F1, GTF2F2, TCEA1, ERCC2, ERCC3, GTF2H2, GTF2H3, GTF2H4, GTF2H5, GTF2A1, GTF2A2, GTF2B and TBP; this large multi-subunit PIC complex mediates DNA unwinding and targets Pol II core to the transcription start site where the first phosphodiester bond forms. In terms of processing, the alpha and beta subunits are postranslationally produced from the precursor form by TASP1. The cleavage promotes proteasomal degradation. Expressed in pachytene spermatocytes and spermatids.

The protein resides in the nucleus. Functionally, TFIIA is a component of the transcription machinery of RNA polymerase II and plays an important role in transcriptional activation. TFIIA in a complex with TBP mediates transcriptional activity. This chain is Transcription initiation factor IIA subunit 1 (Gtf2a1), found in Mus musculus (Mouse).